We begin with the raw amino-acid sequence, 489 residues long: Sphingolipid C9-methyltransferase (489 aa).

2 consecutive transmembrane segments (helical) span residues 29–49 and 59–79; these read GAKNFSNWLLLGLLTGVPLFV and TFIFFFILFAIPILMAYWTVL. S-adenosyl-L-methionine-binding positions include 202–203, 239–247, 265–270, and 295–296; these read YT, LLDLGCGWG, TLGKNQ, and YR.

This sequence belongs to the CFA/CMAS family.

The protein resides in the membrane. It catalyses the reaction a (4E,8E)-4-sphinga-4,8-dienine ceramide + S-adenosyl-L-methionine = a 9-methyl-(4E,8E)-sphinga-4,8-dienine ceramide + S-adenosyl-L-homocysteine + H(+). It functions in the pathway lipid metabolism; sphingolipid metabolism. Catalyzes methylation of the sphingoid base component of glucosylceramides (GluCers) at the C9-position. Sphingolipid C9-methylation requires 4,8-desaturated ceramides as substrates. Glucosylceramides play important roles in growth, differentiation and pathogenicity. The methyl group at the C9-position distinguishes fungal glucosylceramides from those of plants and animals, and may thus play a role in host-pathogen interactions enabling the host to recognize the fungal attack and initiate specific defense responses. The chain is Sphingolipid C9-methyltransferase from Komagataella phaffii (strain GS115 / ATCC 20864) (Yeast).